We begin with the raw amino-acid sequence, 107 residues long: Phosphoribosyl-ATP pyrophosphatase (107 aa).

It belongs to the PRA-PH family.

It is found in the cytoplasm. It catalyses the reaction 1-(5-phospho-beta-D-ribosyl)-ATP + H2O = 1-(5-phospho-beta-D-ribosyl)-5'-AMP + diphosphate + H(+). The protein operates within amino-acid biosynthesis; L-histidine biosynthesis; L-histidine from 5-phospho-alpha-D-ribose 1-diphosphate: step 2/9. This chain is Phosphoribosyl-ATP pyrophosphatase, found in Bacillus cereus (strain ZK / E33L).